Consider the following 729-residue polypeptide: Sodium-dependent neutral amino acid transporter B(0)AT2 (729 aa).

The Cytoplasmic segment spans residues 1 to 69 (MPKNSKVVKR…ERPAWNSKLQ (69 aa)). 2 positions are modified to phosphoserine: S25 and S55. The next 3 membrane-spanning stretches (helical) occupy residues 70 to 90 (YILA…FPYL), 98 to 117 (AYLL…LFFL), and 142 to 162 (GIGF…NVII). Over 163-225 (GWTLFYFSQS…SSISESGGLN (63 aa)) the chain is Extracellular. A glycan (N-linked (GlcNAc...) asparagine) is linked at N187. Transmembrane regions (helical) follow at residues 226-244 (WKMT…LAMI), 253-270 (IMYF…CFLI), 306-323 (VFFA…FSSY), and 335-356 (VLVS…FAVL). The Extracellular segment spans residues 357–452 (GFKANIVNEK…FIAFTEAMTH (96 aa)). N-linked (GlcNAc...) asparagine glycans are attached at residues N383 and N394. The next 5 membrane-spanning stretches (helical) occupy residues 453-472 (FPAS…NLGL), 496-514 (ILTV…MFVQ), 530-550 (TLPL…VYGI), 571-592 (YMWK…IVNM), and 620-642 (VVCF…IRRC). The Cytoplasmic portion of the chain corresponds to 643 to 729 (NLIDDSSGNL…DMPDMPESDL (87 aa)). Phosphoserine is present on residues S687, S699, and S701.

Belongs to the sodium:neurotransmitter symporter (SNF) (TC 2.A.22) family. SLC6A15 subfamily. Widely distributed in the central nervous system, including the olfactory bulb, the hypothalamus, the cerebral cortex, the hippocampus, and the cerebellum. In addition, intense expression is found in the motor nuclei including the oculomotor nucleus, abducens nucleus, trigeminal motor nucleus, facial nucleus, hypoglossal nucleus and ventral horn of spinal cord. Intense hybridization signals are also observed in the nuclei containing monoaminergic neurons, such as locus coeruleus, the substantia nigra pars compacta, the ventral tegmental area, the dorsal raphe nucleus and the median raphe nucleus.

The protein resides in the membrane. The enzyme catalyses L-leucine(in) + Na(+)(in) = L-leucine(out) + Na(+)(out). It carries out the reaction L-isoleucine(in) + Na(+)(in) = L-isoleucine(out) + Na(+)(out). The catalysed reaction is L-methionine(in) + Na(+)(in) = L-methionine(out) + Na(+)(out). It catalyses the reaction L-proline(in) + Na(+)(in) = L-proline(out) + Na(+)(out). The enzyme catalyses L-alanine(in) + Na(+)(in) = L-alanine(out) + Na(+)(out). It carries out the reaction L-asparagine(in) + Na(+)(in) = L-asparagine(out) + Na(+)(out). The catalysed reaction is L-valine(in) + Na(+)(in) = L-valine(out) + Na(+)(out). It catalyses the reaction L-cysteine(in) + Na(+)(in) = L-cysteine(out) + Na(+)(out). The enzyme catalyses L-glutamine(in) + Na(+)(in) = L-glutamine(out) + Na(+)(out). It carries out the reaction L-serine(in) + Na(+)(in) = L-serine(out) + Na(+)(out). The catalysed reaction is L-threonine(in) + Na(+)(in) = L-threonine(out) + Na(+)(out). It catalyses the reaction L-pipecolate(in) + Na(+)(in) = L-pipecolate(out) + Na(+)(out). The enzyme catalyses L-phenylalanine(in) + Na(+)(in) = L-phenylalanine(out) + Na(+)(out). Its function is as follows. Functions as a sodium-dependent neutral amino acid transporter. Exhibits preference for the branched-chain amino acids, particularly leucine, valine and isoleucine and methionine. Can also transport low-affinity substrates such as alanine, phenylalanine, glutamine and pipecolic acid. Mediates the saturable, pH-sensitive and electrogenic cotransport of proline and sodium ions with a stoichiometry of 1:1. May have a role as transporter for neurotransmitter precursors into neurons. In contrast to other members of the neurotransmitter transporter family, does not appear to be chloride-dependent. The protein is Sodium-dependent neutral amino acid transporter B(0)AT2 (Slc6a15) of Rattus norvegicus (Rat).